Reading from the N-terminus, the 118-residue chain is Large ribosomal subunit protein bL21c (118 aa).

This sequence belongs to the bacterial ribosomal protein bL21 family. Part of the 50S ribosomal subunit.

The protein resides in the plastid. The protein localises to the chloroplast. Functionally, this protein binds to 23S rRNA. The protein is Large ribosomal subunit protein bL21c of Anthoceros angustus (Hornwort).